We begin with the raw amino-acid sequence, 1407 residues long: DNA-directed RNA polymerase subunit beta' (1407 aa).

Zn(2+) is bound by residues cysteine 70, cysteine 72, cysteine 85, and cysteine 88. Residues aspartate 460, aspartate 462, and aspartate 464 each coordinate Mg(2+). Zn(2+)-binding residues include cysteine 814, cysteine 888, cysteine 895, and cysteine 898. N6-acetyllysine is present on lysine 972.

This sequence belongs to the RNA polymerase beta' chain family. In terms of assembly, the RNAP catalytic core consists of 2 alpha, 1 beta, 1 beta' and 1 omega subunit. When a sigma factor is associated with the core the holoenzyme is formed, which can initiate transcription. Mg(2+) is required as a cofactor. Zn(2+) serves as cofactor.

It carries out the reaction RNA(n) + a ribonucleoside 5'-triphosphate = RNA(n+1) + diphosphate. DNA-dependent RNA polymerase catalyzes the transcription of DNA into RNA using the four ribonucleoside triphosphates as substrates. This is DNA-directed RNA polymerase subunit beta' from Escherichia coli O6:H1 (strain CFT073 / ATCC 700928 / UPEC).